We begin with the raw amino-acid sequence, 563 residues long: GTPase Obg (563 aa).

An Obg domain is found at 2–168 (SDFVDRVTVH…RDVILELKSI (167 aa)). Residues 169–349 (ADVALVGFPS…LNFALSALVH (181 aa)) form the OBG-type G domain. GTP is bound by residues 175–182 (GFPSAGKS), 200–204 (FTTLV), 221–224 (DVPG), 301–304 (NKID), and 330–332 (STA). Residues Ser182 and Thr202 each coordinate Mg(2+). In terms of domain architecture, OCT spans 383–469 (DEGGSALEFT…ARMVEFDWDP (87 aa)). The tract at residues 529-563 (RKAGHWADPTVDDDRHDETSLFGHGESSEDGETEE) is disordered.

The protein belongs to the TRAFAC class OBG-HflX-like GTPase superfamily. OBG GTPase family. As to quaternary structure, monomer. It depends on Mg(2+) as a cofactor.

Its subcellular location is the cytoplasm. An essential GTPase which binds GTP, GDP and possibly (p)ppGpp with moderate affinity, with high nucleotide exchange rates and a fairly low GTP hydrolysis rate. Plays a role in control of the cell cycle, stress response, ribosome biogenesis and in those bacteria that undergo differentiation, in morphogenesis control. The chain is GTPase Obg from Bifidobacterium longum (strain DJO10A).